Consider the following 578-residue polypeptide: MKASRFFIGTLKEAPADAEIVSHKLMVRAGMIRRVAGGIYNYLPVGLRSIRKVEAIVREEMNRAGAIELLMPAVQPAELWQESGRWEQYGPELLRFKDRKQNEFVIGPTHEEVVTDIARNQIKSYRQMPVNFYQIQTKFRDEIRPRFGVMRGREFIMKDAYSFDKDHESLKESYKKMYDAYVRIFTRIGLEFRPVAADNGSIGGSGSHEFHVIADTGEDAIAYCPTSDFAANVEAAEALPLLASRAAPAEAMQKVATPGKAKCEAVAELMGIPLERTIKSIVLATDNEGAEPTIWLLMLRGDHDLNEIKTAKLPGLAGHRFATEAEIVEWFGTPPGYLGPIGTKKPVRVVADRTVANMSDFVVGANEVDYHIAGVNWGRDLPEPVVADIRNVKAGDPSPDGKGALDICRGIEVGHVFQLGTKYSDAMGATFIDESGKAQPMVMGCYGIGITRILGAAIEQNFDDKGIVWPEAIAPFEVVLCPMGYDRSDAVREAADKLYADLAAAGIDVILDDRGERPGVMFADWELIGVPHRLVIGERGLKDGKIEYQGRRDAEATLLPADSAAAAVAEKVRAALAR.

The protein belongs to the class-II aminoacyl-tRNA synthetase family. ProS type 1 subfamily. Homodimer.

The protein localises to the cytoplasm. It carries out the reaction tRNA(Pro) + L-proline + ATP = L-prolyl-tRNA(Pro) + AMP + diphosphate. Functionally, catalyzes the attachment of proline to tRNA(Pro) in a two-step reaction: proline is first activated by ATP to form Pro-AMP and then transferred to the acceptor end of tRNA(Pro). As ProRS can inadvertently accommodate and process non-cognate amino acids such as alanine and cysteine, to avoid such errors it has two additional distinct editing activities against alanine. One activity is designated as 'pretransfer' editing and involves the tRNA(Pro)-independent hydrolysis of activated Ala-AMP. The other activity is designated 'posttransfer' editing and involves deacylation of mischarged Ala-tRNA(Pro). The misacylated Cys-tRNA(Pro) is not edited by ProRS. This Burkholderia pseudomallei (strain K96243) protein is Proline--tRNA ligase.